A 226-amino-acid polypeptide reads, in one-letter code: N-acetyltransferase family 8 member 2 (226 aa).

The next 2 membrane-spanning stretches (helical) occupy residues 33–55 (FYHVLTLPHSLLLFPGVPVTIIL) and 60–82 (WLLATVYSFLFLLCLRLIFWVSC). An N-acetyltransferase domain is found at 69-221 (LFLLCLRLIF…FHFTYSLPSV (153 aa)). Lys-204 bears the N6-acetyllysine mark.

It belongs to the camello family.

The protein resides in the membrane. Functionally, probable acetyltransferase. Has no detectable histone acetyltransferase activity towards histone H3 or H4. In Rattus norvegicus (Rat), this protein is N-acetyltransferase family 8 member 2.